The primary structure comprises 177 residues: Antigen TyF1 (177 aa).

It belongs to the Dps family. As to quaternary structure, homodecamer.

In Treponema pallidum subsp. pertenue (Yaws treponeme), this protein is Antigen TyF1.